We begin with the raw amino-acid sequence, 462 residues long: Argininosuccinate lyase (462 aa).

This sequence belongs to the lyase 1 family. Argininosuccinate lyase subfamily.

It localises to the cytoplasm. It catalyses the reaction 2-(N(omega)-L-arginino)succinate = fumarate + L-arginine. It participates in amino-acid biosynthesis; L-arginine biosynthesis; L-arginine from L-ornithine and carbamoyl phosphate: step 3/3. This chain is Argininosuccinate lyase, found in Bacillus thuringiensis (strain Al Hakam).